Reading from the N-terminus, the 232-residue chain is Ribonuclease 3 (232 aa).

The RNase III domain occupies 6–137; sequence QEMLKRDFNI…FIGALYLDQG (132 aa). Residue Glu50 coordinates Mg(2+). The active site involves Asp54. Mg(2+)-binding residues include Asp123 and Glu126. Residue Glu126 is part of the active site. In terms of domain architecture, DRBM spans 163–232; sequence DNKTELQEVL…AYQALKKLRK (70 aa).

The protein belongs to the ribonuclease III family. Homodimer. Mg(2+) is required as a cofactor.

It localises to the cytoplasm. It catalyses the reaction Endonucleolytic cleavage to 5'-phosphomonoester.. Digests double-stranded RNA. Involved in the processing of primary rRNA transcript to yield the immediate precursors to the large and small rRNAs (23S and 16S). Processes some mRNAs, and tRNAs when they are encoded in the rRNA operon. Processes pre-crRNA and tracrRNA of type II CRISPR loci if present in the organism. The sequence is that of Ribonuclease 3 from Ligilactobacillus salivarius (strain UCC118) (Lactobacillus salivarius).